Here is a 710-residue protein sequence, read N- to C-terminus: Tubulin polyglutamylase TTLL11 (710 aa).

Positions Val41–Lys135 are disordered. Basic and acidic residues predominate over residues Pro51–Pro60. The segment covering Ala64–Gln82 has biased composition (low complexity). A compositionally biased stretch (pro residues) spans Arg83–Pro93. Residues Asn123–Lys135 show a composition bias toward polar residues. The region spanning Pro128–Thr480 is the TTL domain. ATP is bound by residues Lys249, Gln255–Gly256, Gln282–Ile285, and Lys295–Asp297. Gln255 serves as a coordination point for a protein. Arg321 contacts L-glutamate. Thr343–Asn344 contacts ATP. Tyr345, Ser346, and Lys365 together coordinate L-glutamate. The Mg(2+) site is built by Asp428, Glu441, and Asn443. A c-MTBD region region spans residues Leu467–Lys538. An L-glutamate-binding site is contributed by Lys473. The segment at Gly665–Ser710 is disordered.

This sequence belongs to the tubulin--tyrosine ligase family. Requires Mg(2+) as cofactor.

It is found in the cytoplasm. It localises to the cytoskeleton. Its subcellular location is the cilium basal body. The enzyme catalyses L-glutamyl-[protein] + L-glutamate + ATP = gamma-L-glutamyl-L-glutamyl-[protein] + ADP + phosphate + H(+). It catalyses the reaction (L-glutamyl)(n)-gamma-L-glutamyl-L-glutamyl-[protein] + L-glutamate + ATP = (L-glutamyl)(n+1)-gamma-L-glutamyl-L-glutamyl-[protein] + ADP + phosphate + H(+). Functionally, polyglutamylase which modifies tubulin, generating polyglutamate side chains of variable lengths on the gamma-carboxyl group of specific glutamate residues within the C-terminal tail of tubulin. Preferentially mediates ATP-dependent polyglutamate long side-chain elongation over the initiation step of the polyglutamylation reaction. Preferentially modifies the alpha-tubulin tail over a beta-tail. Required for CCSAP localization to both spindle and cilia microtubules. Promotes tubulin polyglutamylation which stimulates spastin/SPAST-mediated microtubule severing, thereby regulating microtubule functions. This Homo sapiens (Human) protein is Tubulin polyglutamylase TTLL11.